Reading from the N-terminus, the 142-residue chain is UPF0102 protein Bcep1808_0248 (142 aa).

This sequence belongs to the UPF0102 family.

In Burkholderia vietnamiensis (strain G4 / LMG 22486) (Burkholderia cepacia (strain R1808)), this protein is UPF0102 protein Bcep1808_0248.